The sequence spans 419 residues: CDP-diacylglycerol--serine O-phosphatidyltransferase 3 (419 aa).

Positions 1–51 are disordered; the sequence is MPVRRRWYPPSSTAAQPSPDGGDVNTDDADACPSSRQQRPPSLPQHSAPIH. Over residues 33–47 the composition is skewed to low complexity; that stretch reads PSSRQQRPPSLPQHS. The next 7 helical transmembrane spans lie at 103–123, 142–162, 168–188, 260–280, 287–307, 359–379, and 384–404; these read PHTV…SGVL, WAMI…TILI, VWRL…FLLF, LLLW…RHML, WWDS…WAGM, FIQV…TFFL, and WIPP…LIAI.

The protein belongs to the CDP-alcohol phosphatidyltransferase class-I family.

The protein localises to the endoplasmic reticulum membrane. The enzyme catalyses a CDP-1,2-diacyl-sn-glycerol + L-serine = a 1,2-diacyl-sn-glycero-3-phospho-L-serine + CMP + H(+). The protein operates within phospholipid metabolism; phosphatidylethanolamine biosynthesis; phosphatidylethanolamine from CDP-diacylglycerol: step 1/2. In terms of biological role, catalyzes a base-exchange reaction in which the polar head group of phosphatidylethanolamine (PE) or phosphatidylcholine (PC) is replaced by L-serine. The protein is CDP-diacylglycerol--serine O-phosphatidyltransferase 3 (PSS3) of Oryza sativa subsp. japonica (Rice).